Consider the following 149-residue polypeptide: Histone H2A (149 aa).

Positions 1–23 are enriched in basic residues; it reads METAGKAKKGFGGRKGGPRKKSV. 2 disordered regions span residues 1–25 and 127–149; these read META…SVTR and KTAE…PKKA. Basic and acidic residues predominate over residues 127–138; sequence KTAEKAAKEPKS. 2 consecutive short sequence motifs (SPKK motif) follow at residues 138-141 and 145-148; these read SPSK and SPKK.

This sequence belongs to the histone H2A family. As to quaternary structure, the nucleosome is a histone octamer containing two molecules each of H2A, H2B, H3 and H4 assembled in one H3-H4 heterotetramer and two H2A-H2B heterodimers. The octamer wraps approximately 147 bp of DNA.

The protein resides in the nucleus. It localises to the chromosome. In terms of biological role, core component of nucleosome. Nucleosomes wrap and compact DNA into chromatin, limiting DNA accessibility to the cellular machineries which require DNA as a template. Histones thereby play a central role in transcription regulation, DNA repair, DNA replication and chromosomal stability. DNA accessibility is regulated via a complex set of post-translational modifications of histones, also called histone code, and nucleosome remodeling. This chain is Histone H2A, found in Petroselinum crispum (Parsley).